The primary structure comprises 683 residues: Elongation factor G-like protein (683 aa).

The 263-residue stretch at 5 to 267 (QNVRSAALIG…YLGDIGVSPE (263 aa)) folds into the tr-type G domain. Residues 14 to 21 (GHNGSGKS), 73 to 77 (DTPGF), and 127 to 130 (NQMD) each bind GTP.

It belongs to the TRAFAC class translation factor GTPase superfamily. Classic translation factor GTPase family. EF-G/EF-2 subfamily.

The polypeptide is Elongation factor G-like protein (Thermotoga maritima (strain ATCC 43589 / DSM 3109 / JCM 10099 / NBRC 100826 / MSB8)).